We begin with the raw amino-acid sequence, 118 residues long: Large ribosomal subunit protein bL19 (118 aa).

This sequence belongs to the bacterial ribosomal protein bL19 family.

This protein is located at the 30S-50S ribosomal subunit interface and may play a role in the structure and function of the aminoacyl-tRNA binding site. This is Large ribosomal subunit protein bL19 from Lactiplantibacillus plantarum (strain ATCC BAA-793 / NCIMB 8826 / WCFS1) (Lactobacillus plantarum).